Reading from the N-terminus, the 360-residue chain is DNA replication and repair protein RecF (360 aa).

30–37 (GHNGSGKT) is a binding site for ATP.

This sequence belongs to the RecF family.

Its subcellular location is the cytoplasm. Its function is as follows. The RecF protein is involved in DNA metabolism; it is required for DNA replication and normal SOS inducibility. RecF binds preferentially to single-stranded, linear DNA. It also seems to bind ATP. In Shewanella amazonensis (strain ATCC BAA-1098 / SB2B), this protein is DNA replication and repair protein RecF.